The primary structure comprises 194 residues: Adenylate kinase (194 aa).

10–15 (GAGKGT) contributes to the ATP binding site. The NMP stretch occupies residues 30 to 59 (STGDMLRAAVAAGTPVGLKAKAVMESGGLV). AMP-binding positions include T31, R36, 57 to 59 (GLV), 85 to 88 (GFPR), and Q92. The segment at 126–142 (NRAAEAKAKGEPVRKDD) is LID. R127 provides a ligand contact to ATP. Residues R139 and R150 each contribute to the AMP site. A178 is a binding site for ATP.

This sequence belongs to the adenylate kinase family. As to quaternary structure, monomer.

It localises to the cytoplasm. The enzyme catalyses AMP + ATP = 2 ADP. Its pathway is purine metabolism; AMP biosynthesis via salvage pathway; AMP from ADP: step 1/1. In terms of biological role, catalyzes the reversible transfer of the terminal phosphate group between ATP and AMP. Plays an important role in cellular energy homeostasis and in adenine nucleotide metabolism. The polypeptide is Adenylate kinase (Azorhizobium caulinodans (strain ATCC 43989 / DSM 5975 / JCM 20966 / LMG 6465 / NBRC 14845 / NCIMB 13405 / ORS 571)).